Reading from the N-terminus, the 1642-residue chain is Mitochondrial 3' processome subunit 2 (1642 aa).

The N-terminal 27 residues, 1 to 27, are a transit peptide targeting the mitochondrion; that stretch reads MGLPFLCHTRVCLFSNKIPFVLCGSRF. 2 disordered regions span residues 43–69 and 745–772; these read ETLN…PQKK and KGEK…LSGP. Residues 49–65 show a composition bias toward polar residues; the sequence is ELSSPSTSKEPSVGSDS.

Component of the mitochondrial 3' processome (MPsome) complex composed at least of terminal uridylyltransferase KRET1/TUT1, 3'-5' exonuclease DSS1, MPSS1, MPSS2 and MPSS3. Within the complex, interacts with DSS1.

Its subcellular location is the mitochondrion. Its function is as follows. As part of the mitochondrial 3' processome (MPsome), involved in the maturation of guided RNA (gRNA) precursors. In Trypanosoma brucei brucei, this protein is Mitochondrial 3' processome subunit 2.